A 157-amino-acid chain; its full sequence is Probable Brix domain-containing ribosomal biogenesis protein (157 aa).

The Brix domain occupies 1–157 (MLVTSSRKPS…KLNLRGFKKY (157 aa)).

In terms of biological role, probably involved in the biogenesis of the ribosome. The chain is Probable Brix domain-containing ribosomal biogenesis protein from Methanosarcina barkeri (strain Fusaro / DSM 804).